A 317-amino-acid chain; its full sequence is Fe-S cluster assembly protein DRE2 (317 aa).

The N-terminal SAM-like domain stretch occupies residues 1 to 131 (MERMLFLSPP…KPNFGAQDTV (131 aa)). Positions 132–209 (PLKLGKKKKA…EEALMDEEDM (78 aa)) are linker. [2Fe-2S] cluster-binding residues include cysteine 219, cysteine 230, cysteine 233, and cysteine 235. The tract at residues 219-235 (CRPKAGKRRRACKDCTC) is fe-S binding site A. [4Fe-4S] cluster-binding residues include cysteine 280, cysteine 283, cysteine 291, and cysteine 294. 2 consecutive short sequence motifs (cx2C motif) follow at residues 280-283 (CGNC) and 291-294 (CDGC). Residues 280-294 (CGNCALGDAFRCDGC) form a fe-S binding site B region.

This sequence belongs to the anamorsin family. In terms of assembly, monomer. Interacts with TAH18. Interacts with MIA40. [2Fe-2S] cluster serves as cofactor. It depends on [4Fe-4S] cluster as a cofactor.

The protein resides in the cytoplasm. Its subcellular location is the mitochondrion intermembrane space. Component of the cytosolic iron-sulfur (Fe-S) protein assembly (CIA) machinery required for the maturation of extramitochondrial Fe-S proteins. Part of an electron transfer chain functioning in an early step of cytosolic Fe-S biogenesis, facilitating the de novo assembly of a [4Fe-4S] cluster on the scaffold complex CFD1-NBP35. Electrons are transferred to DRE2 from NADPH via the FAD- and FMN-containing protein TAH18. TAH18-DRE2 are also required for the assembly of the diferric tyrosyl radical cofactor of ribonucleotide reductase (RNR), probably by providing electrons for reduction during radical cofactor maturation in the catalytic small subunit RNR2. The polypeptide is Fe-S cluster assembly protein DRE2 (Uncinocarpus reesii (strain UAMH 1704)).